We begin with the raw amino-acid sequence, 252 residues long: Adenosylcobinamide-GDP ribazoletransferase (252 aa).

Helical transmembrane passes span 29-49 (LYWF…LGYV), 50-70 (GSLS…GIVL), 104-124 (VGSF…VAVV), 129-149 (FGLF…QVLL), 166-186 (FVAG…LALL), and 194-214 (FPTM…VGMV).

Belongs to the CobS family. It depends on Mg(2+) as a cofactor.

The protein resides in the cell inner membrane. The catalysed reaction is alpha-ribazole + adenosylcob(III)inamide-GDP = adenosylcob(III)alamin + GMP + H(+). It carries out the reaction alpha-ribazole 5'-phosphate + adenosylcob(III)inamide-GDP = adenosylcob(III)alamin 5'-phosphate + GMP + H(+). Its pathway is cofactor biosynthesis; adenosylcobalamin biosynthesis; adenosylcobalamin from cob(II)yrinate a,c-diamide: step 7/7. In terms of biological role, joins adenosylcobinamide-GDP and alpha-ribazole to generate adenosylcobalamin (Ado-cobalamin). Also synthesizes adenosylcobalamin 5'-phosphate from adenosylcobinamide-GDP and alpha-ribazole 5'-phosphate. The protein is Adenosylcobinamide-GDP ribazoletransferase of Chlorobium chlorochromatii (strain CaD3).